A 209-amino-acid chain; its full sequence is 7-carboxy-7-deazaguanine synthase (209 aa).

Substrate contacts are provided by residues 10–12 (IQG) and R25. One can recognise a Radical SAM core domain in the interval 16–205 (YAGLPMLFVR…PQIHKIIYGD (190 aa)). [4Fe-4S] cluster-binding residues include C29, C33, and C36. Mg(2+) is bound at residue T38. T68 contacts substrate. Residue G70 participates in S-adenosyl-L-methionine binding.

The protein belongs to the radical SAM superfamily. 7-carboxy-7-deazaguanine synthase family. As to quaternary structure, homodimer. It depends on [4Fe-4S] cluster as a cofactor. S-adenosyl-L-methionine serves as cofactor. The cofactor is Mg(2+).

The enzyme catalyses 6-carboxy-5,6,7,8-tetrahydropterin + H(+) = 7-carboxy-7-deazaguanine + NH4(+). The protein operates within purine metabolism; 7-cyano-7-deazaguanine biosynthesis. In terms of biological role, catalyzes the complex heterocyclic radical-mediated conversion of 6-carboxy-5,6,7,8-tetrahydropterin (CPH4) to 7-carboxy-7-deazaguanine (CDG), a step common to the biosynthetic pathways of all 7-deazapurine-containing compounds. This is 7-carboxy-7-deazaguanine synthase from Thermoplasma acidophilum (strain ATCC 25905 / DSM 1728 / JCM 9062 / NBRC 15155 / AMRC-C165).